A 555-amino-acid polypeptide reads, in one-letter code: Potassium-transporting ATPase potassium-binding subunit (555 aa).

The next 10 helical transmembrane spans lie at I2–I22, Q60–F80, I130–F150, V173–T193, M246–Y266, I278–E298, A374–V394, L412–L432, L483–L503, and G525–L545.

It belongs to the KdpA family. As to quaternary structure, the system is composed of three essential subunits: KdpA, KdpB and KdpC.

The protein localises to the cell membrane. Functionally, part of the high-affinity ATP-driven potassium transport (or Kdp) system, which catalyzes the hydrolysis of ATP coupled with the electrogenic transport of potassium into the cytoplasm. This subunit binds the extracellular potassium ions and delivers the ions to the membrane domain of KdpB through an intramembrane tunnel. The polypeptide is Potassium-transporting ATPase potassium-binding subunit (Bacillus cereus (strain ATCC 10987 / NRS 248)).